The following is a 191-amino-acid chain: Small ribosomal subunit protein uS5 (191 aa).

The tract at residues 1-20 (MAGERERGGRERSRDREERD) is disordered. The 64-residue stretch at 23–86 (FVDKLVHINR…ESAKRNLTRV (64 aa)) folds into the S5 DRBM domain.

This sequence belongs to the universal ribosomal protein uS5 family. In terms of assembly, part of the 30S ribosomal subunit. Contacts proteins S4 and S8.

Its function is as follows. With S4 and S12 plays an important role in translational accuracy. Functionally, located at the back of the 30S subunit body where it stabilizes the conformation of the head with respect to the body. This is Small ribosomal subunit protein uS5 from Nitrobacter winogradskyi (strain ATCC 25391 / DSM 10237 / CIP 104748 / NCIMB 11846 / Nb-255).